The primary structure comprises 151 residues: Small heat shock protein HspH (151 aa).

Positions 28 to 138 (RAGEDNYPPY…KPRRIAINAA (111 aa)) constitute a sHSP domain.

Belongs to the small heat shock protein (HSP20) family.

This is Small heat shock protein HspH (hspH) from Bradyrhizobium diazoefficiens (strain JCM 10833 / BCRC 13528 / IAM 13628 / NBRC 14792 / USDA 110).